A 388-amino-acid polypeptide reads, in one-letter code: Protein FAM199X (388 aa).

Low complexity predominate over residues 288–312 (SMVSSASSSGSSVGNSASNSSANMS). Positions 288-358 (SMVSSASSSG…QLKEQRQARK (71 aa)) are disordered. A phosphoserine mark is found at Ser316 and Ser321. Residues 330 to 349 (DSKKRSKQRKLQQKAFRKRQ) show a composition bias toward basic residues.

It belongs to the FAM199 family.

In Mus musculus (Mouse), this protein is Protein FAM199X (Fam199x).